The chain runs to 152 residues: Large-conductance mechanosensitive channel (152 aa).

The next 2 helical transmembrane spans lie at 14-34 (VIDLAVGVVIGAAFGSIVKSL) and 84-104 (VGQFINSVVSFVLIAFSVFLL).

Belongs to the MscL family. Homopentamer.

It localises to the cell inner membrane. Its function is as follows. Channel that opens in response to stretch forces in the membrane lipid bilayer. May participate in the regulation of osmotic pressure changes within the cell. This chain is Large-conductance mechanosensitive channel, found in Laribacter hongkongensis (strain HLHK9).